Here is a 284-residue protein sequence, read N- to C-terminus: D-tagatose-1,6-bisphosphate aldolase subunit GatY (284 aa).

Residue D82 is the Proton donor of the active site. 2 residues coordinate Zn(2+): H83 and H180. A dihydroxyacetone phosphate-binding site is contributed by G181. H208 serves as a coordination point for Zn(2+). Residues 209-211 (GAS) and 230-233 (NVAT) contribute to the dihydroxyacetone phosphate site.

The protein belongs to the class II fructose-bisphosphate aldolase family. TagBP aldolase GatY subfamily. In terms of assembly, forms a complex with GatZ. It depends on Zn(2+) as a cofactor.

The enzyme catalyses D-tagatofuranose 1,6-bisphosphate = D-glyceraldehyde 3-phosphate + dihydroxyacetone phosphate. Its pathway is carbohydrate metabolism; D-tagatose 6-phosphate degradation; D-glyceraldehyde 3-phosphate and glycerone phosphate from D-tagatose 6-phosphate: step 2/2. Functionally, catalytic subunit of the tagatose-1,6-bisphosphate aldolase GatYZ, which catalyzes the reversible aldol condensation of dihydroxyacetone phosphate (DHAP or glycerone-phosphate) with glyceraldehyde 3-phosphate (G3P) to produce tagatose 1,6-bisphosphate (TBP). Requires GatZ subunit for full activity and stability. Is involved in the catabolism of galactitol. This Salmonella choleraesuis (strain SC-B67) protein is D-tagatose-1,6-bisphosphate aldolase subunit GatY.